Reading from the N-terminus, the 56-residue chain is uncharacterized protein (56 aa).

Positions 15 to 56 are disordered; that stretch reads SIGNISSGNINNSIGNSSSSGCDDVFNNSTNNNNNNNNNNNK.

This is an uncharacterized protein from Dictyostelium discoideum (Social amoeba).